The following is a 154-amino-acid chain: UPF0756 membrane protein BPUM_2558 (154 aa).

4 consecutive transmembrane segments (helical) span residues 8 to 28, 54 to 74, 87 to 107, and 117 to 137; these read FLVL…ILAV, WGVT…DIGF, WIAL…IVLL, and LVFG…GPLI.

It belongs to the UPF0756 family.

Its subcellular location is the cell membrane. This chain is UPF0756 membrane protein BPUM_2558, found in Bacillus pumilus (strain SAFR-032).